Consider the following 262-residue polypeptide: Ribosome biogenesis GTPase A (262 aa).

One can recognise a CP-type G domain in the interval lysine 12 to lysine 157. GTP is bound by residues asparagine 54–aspartate 57, asparagine 109–threonine 114, and glycine 153.

It belongs to the TRAFAC class YlqF/YawG GTPase family. MTG1 subfamily.

It localises to the cytoplasm. In terms of biological role, required for a late step of 50S ribosomal subunit assembly. Has GTPase activity. Binds to the 23S rRNA. The chain is Ribosome biogenesis GTPase A from Thermotoga maritima (strain ATCC 43589 / DSM 3109 / JCM 10099 / NBRC 100826 / MSB8).